A 465-amino-acid polypeptide reads, in one-letter code: Cysteine--tRNA ligase (465 aa).

Cys-29 contacts Zn(2+). Positions Pro-31 to Asn-41 match the 'HIGH' region motif. Zn(2+) is bound by residues Cys-209, His-234, and Glu-238. The 'KMSKS' region signature appears at Lys-266–Ser-270. Lys-269 contacts ATP. Ser-270 is subject to Phosphoserine.

Belongs to the class-I aminoacyl-tRNA synthetase family. Monomer. Requires Zn(2+) as cofactor.

Its subcellular location is the cytoplasm. The catalysed reaction is tRNA(Cys) + L-cysteine + ATP = L-cysteinyl-tRNA(Cys) + AMP + diphosphate. The sequence is that of Cysteine--tRNA ligase from Bacillus thuringiensis (strain Al Hakam).